Consider the following 88-residue polypeptide: Small ribosomal subunit protein uS15c (88 aa).

The protein belongs to the universal ribosomal protein uS15 family. As to quaternary structure, part of the 30S ribosomal subunit.

The protein resides in the plastid. It localises to the chloroplast. This Pinus koraiensis (Korean pine) protein is Small ribosomal subunit protein uS15c (rps15).